The following is a 1024-amino-acid chain: Isoleucine--tRNA ligase (1024 aa).

Positions 52–62 (PTANGRPHVGH) match the 'HIGH' region motif. Residues 590–594 (KMSKS) carry the 'KMSKS' region motif. Lys593 is a binding site for ATP.

The protein belongs to the class-I aminoacyl-tRNA synthetase family. IleS type 2 subfamily. As to quaternary structure, monomer. Requires Zn(2+) as cofactor.

It localises to the cytoplasm. The enzyme catalyses tRNA(Ile) + L-isoleucine + ATP = L-isoleucyl-tRNA(Ile) + AMP + diphosphate. Functionally, catalyzes the attachment of isoleucine to tRNA(Ile). As IleRS can inadvertently accommodate and process structurally similar amino acids such as valine, to avoid such errors it has two additional distinct tRNA(Ile)-dependent editing activities. One activity is designated as 'pretransfer' editing and involves the hydrolysis of activated Val-AMP. The other activity is designated 'posttransfer' editing and involves deacylation of mischarged Val-tRNA(Ile). This is Isoleucine--tRNA ligase from Picrophilus torridus (strain ATCC 700027 / DSM 9790 / JCM 10055 / NBRC 100828 / KAW 2/3).